A 303-amino-acid chain; its full sequence is tRNA dimethylallyltransferase (303 aa).

Glycine 12–serine 19 provides a ligand contact to ATP. Residue threonine 14–serine 19 coordinates substrate. Positions aspartate 37–glutamine 40 are interaction with substrate tRNA.

The protein belongs to the IPP transferase family. As to quaternary structure, monomer. Mg(2+) is required as a cofactor.

The catalysed reaction is adenosine(37) in tRNA + dimethylallyl diphosphate = N(6)-dimethylallyladenosine(37) in tRNA + diphosphate. In terms of biological role, catalyzes the transfer of a dimethylallyl group onto the adenine at position 37 in tRNAs that read codons beginning with uridine, leading to the formation of N6-(dimethylallyl)adenosine (i(6)A). This is tRNA dimethylallyltransferase from Synechocystis sp. (strain ATCC 27184 / PCC 6803 / Kazusa).